Reading from the N-terminus, the 802-residue chain is Acetyl-CoA decarbonylase/synthase complex subunit alpha (802 aa).

The [4Fe-4S] cluster site is built by Cys69, Cys72, Cys73, Cys75, Cys80, and Cys90. His113 contributes to the CO binding site. Positions 246, 274, and 319 each coordinate [Ni-4Fe-4S] cluster. 4Fe-4S ferredoxin-type domains lie at 404-432 and 442-473; these read EELK…ISEA and SKFE…VIEK. Residues Cys413, Cys416, Cys419, Cys423, Cys451, Cys454, Cys457, and Cys461 each coordinate [4Fe-4S] cluster. Cys519, Cys548, and Cys583 together coordinate [Ni-4Fe-4S] cluster.

Belongs to the Ni-containing carbon monoxide dehydrogenase family. In terms of assembly, heterotetramer of two alpha and two epsilon subunits. The ACDS complex is made up of alpha, epsilon, beta, gamma and delta subunits with a probable stoichiometry of (alpha(2)epsilon(2))(4)-beta(8)-(gamma(1)delta(1))(8). Requires [4Fe-4S] cluster as cofactor. [Ni-4Fe-4S] cluster serves as cofactor.

The enzyme catalyses CO + 2 oxidized [2Fe-2S]-[ferredoxin] + H2O = 2 reduced [2Fe-2S]-[ferredoxin] + CO2 + 2 H(+). It functions in the pathway one-carbon metabolism; methanogenesis from acetate. Functionally, part of the ACDS complex that catalyzes the reversible cleavage of acetyl-CoA, allowing growth on acetate as sole source of carbon and energy. The alpha-epsilon subcomponent functions as a carbon monoxide dehydrogenase. This is Acetyl-CoA decarbonylase/synthase complex subunit alpha from Methanococcoides burtonii (strain DSM 6242 / NBRC 107633 / OCM 468 / ACE-M).